Consider the following 217-residue polypeptide: Non-structural protein NS3 (217 aa).

The protein belongs to the orbivirus NS3 family.

In terms of biological role, may play a role in the release of virions from infected cells. The sequence is that of Non-structural protein NS3 (Segment-10) from African horse sickness virus 6 (AHSV-6).